We begin with the raw amino-acid sequence, 725 residues long: IIVTHLTHSCLRSVLEQIAAYGQVVFRLQQFIDEVMGHSSESMLPGSGSVPKKSTEAPFRTYQAFMWALYKYFISSKEELAEIEKCIINNDATITLAIVVDKLAPRLAQLKVLHKVFSTGVAEVPPDTRNVVRASHLLNTLYKAILEYDDVGEASEQTVSLLFSLWVETVRPYLQTVDEWIVHGHLWDGAREFIIQRNKNVPVNHRDFWYATYTLYSVSEKTENEEKMSDNASASSGSDQGPSSRQHTMVSFLKPVLKQIIMAGKSMQLLKNLQCAESTTCQAGARDAERKSLYTLFLESVQSRLRHGEDSTPQVLTEQQATKENLMKMQSIAERHLELDDVHDPLLAINFARMYLEQSDFHEKFAGGDVCVDRSSESVTCQTFELTLRSCLYPHIDKQYLDCCGNLMQTLKKDYRLVEYLQAMRNFFLMEGGDTMYDFYTSIFDKIREKETWQNVSFLNVQLQEAVGQRYPEDSSRLSISFENVDTAKKKLPVHILDGLTLSYKVPWPVDIVISLECQKIYNQVFLLLLQIKWAKYSLDVLLFGELVSTAEKPRLQEGLVREQDTVAQFGPQKEPVRQQIHRMFLLRVKLMHFVNSLHNYIMTRILHSTGLEFQHQVEEAKDLDQLIKIHYRYLSTIHDRCLLREKVSFVKEAIMKVLNLALMFADGWQAGLGTWRMESIEKMESDFKNCHMFLVTILNKAVCRGSFPHLESLALSLMAGMEQS.

A disordered region spans residues Thr222–Gln246. The span at Ala232–Ser244 shows a compositional bias: low complexity.

The protein belongs to the TUBGCP family. As to quaternary structure, component of the gamma-tubulin ring complex (gTuRC) consisting of TUBGCP2, TUBGCP3, TUBGCP4, TUBGCP5 and TUBGCP6 and gamma-tubulin TUBG1 or TUBG2. TUBGCP2, TUBGCP3, TUBGCP4, TUBGCP5 and TUBGCP6 assemble in a 5:5:2:1:1 stoichiometry; each is associated with a gamma-tubulin, thereby arranging 14 gamma-tubulins in a helical manner. Gamma-tubulin at the first position is blocked by TUBGCP3 at the last position, allowing 13 protafilaments to grow into a microtubule. The gTuRC (via TUBGCP3 and TUBGCP6) interacts with ACTB and MZT1; the interactions form a luminal bridge that stabilizes the initial structure during complex assembly. The gTuRC (via TUBGCP2) interacts with MZT2A/MZT2B and CDK5RAP2 (via CM1 motif); the interactions play a role in gTuRC activation.

It localises to the cytoplasm. Its subcellular location is the cytoskeleton. The protein resides in the microtubule organizing center. It is found in the centrosome. Its function is as follows. Component of the gamma-tubulin ring complex (gTuRC) which mediates microtubule nucleation. The gTuRC regulates the minus-end nucleation of alpha-beta tubulin heterodimers that grow into microtubule protafilaments, a critical step in centrosome duplication and spindle formation. The sequence is that of Gamma-tubulin complex component 5 (TUBGCP5) from Macaca fascicularis (Crab-eating macaque).